The sequence spans 403 residues: NADH-quinone oxidoreductase subunit D (403 aa).

The protein belongs to the complex I 49 kDa subunit family. As to quaternary structure, NDH-1 is composed of 14 different subunits. Subunits NuoB, C, D, E, F, and G constitute the peripheral sector of the complex.

It localises to the cell inner membrane. It catalyses the reaction a quinone + NADH + 5 H(+)(in) = a quinol + NAD(+) + 4 H(+)(out). In terms of biological role, NDH-1 shuttles electrons from NADH, via FMN and iron-sulfur (Fe-S) centers, to quinones in the respiratory chain. The immediate electron acceptor for the enzyme in this species is believed to be ubiquinone. Couples the redox reaction to proton translocation (for every two electrons transferred, four hydrogen ions are translocated across the cytoplasmic membrane), and thus conserves the redox energy in a proton gradient. This chain is NADH-quinone oxidoreductase subunit D, found in Ruegeria sp. (strain TM1040) (Silicibacter sp.).